The sequence spans 552 residues: Putative transport protein APL_0966 (552 aa).

Transmembrane regions (helical) follow at residues 4 to 24, 29 to 49, 65 to 85, 95 to 115, and 161 to 181; these read IAII…IGHI, VGLG…CTHL, FGLI…FFAS, GFAV…HKLF, and IAYP…RIIF. 2 RCK C-terminal domains span residues 190–275 and 277–360; these read QEFD…ILGE and ADVS…IIGD. A run of 6 helical transmembrane segments spans residues 370 to 390, 402 to 424, 438 to 458, 463 to 483, 492 to 512, and 529 to 549; these read MLPI…PLYI, AGGP…LYWF, IVLF…DTLL, LAWM…TGFV, YLSL…LAFA, and VYPL…ILLW.

Belongs to the AAE transporter (TC 2.A.81) family. YidE subfamily.

It localises to the cell membrane. In Actinobacillus pleuropneumoniae serotype 5b (strain L20), this protein is Putative transport protein APL_0966.